Consider the following 508-residue polypeptide: Photosystem II CP47 reaction center protein (508 aa).

Transmembrane regions (helical) follow at residues 21–36, 101–115, 140–156, 203–218, 237–252, and 457–472; these read SVHIMHTALVAGWAGS, IVFSGLCFLAAIWHW, GIHLFLSGVACFGFGAF, IAAGTLGILAGLFHLS, VLSSSIAAVFFAAFVV, and SFALLFFFGHIWHGAR.

This sequence belongs to the PsbB/PsbC family. PsbB subfamily. As to quaternary structure, PSII is composed of 1 copy each of membrane proteins PsbA, PsbB, PsbC, PsbD, PsbE, PsbF, PsbH, PsbI, PsbJ, PsbK, PsbL, PsbM, PsbT, PsbX, PsbY, PsbZ, Psb30/Ycf12, at least 3 peripheral proteins of the oxygen-evolving complex and a large number of cofactors. It forms dimeric complexes. Binds multiple chlorophylls. PSII binds additional chlorophylls, carotenoids and specific lipids. serves as cofactor.

Its subcellular location is the plastid. It is found in the chloroplast thylakoid membrane. One of the components of the core complex of photosystem II (PSII). It binds chlorophyll and helps catalyze the primary light-induced photochemical processes of PSII. PSII is a light-driven water:plastoquinone oxidoreductase, using light energy to abstract electrons from H(2)O, generating O(2) and a proton gradient subsequently used for ATP formation. The chain is Photosystem II CP47 reaction center protein from Acorus calamus var. americanus (American sweet flag).